Consider the following 296-residue polypeptide: Ribosomal protein L11 methyltransferase (296 aa).

Thr147, Gly168, Asp190, and Asn232 together coordinate S-adenosyl-L-methionine.

This sequence belongs to the methyltransferase superfamily. PrmA family.

The protein resides in the cytoplasm. The enzyme catalyses L-lysyl-[protein] + 3 S-adenosyl-L-methionine = N(6),N(6),N(6)-trimethyl-L-lysyl-[protein] + 3 S-adenosyl-L-homocysteine + 3 H(+). Its function is as follows. Methylates ribosomal protein L11. This chain is Ribosomal protein L11 methyltransferase, found in Marinomonas sp. (strain MWYL1).